The primary structure comprises 163 residues: uncharacterized protein (163 aa).

Disordered stretches follow at residues M1–S78 and P115–H163.

This is an uncharacterized protein from Homo sapiens (Human).